Consider the following 251-residue polypeptide: Probable transcriptional regulatory protein cu0933 (251 aa).

The segment at 56–79 (AKKSSVPNDNIERARKRGSGEEAG) is disordered.

The protein belongs to the TACO1 family.

The protein resides in the cytoplasm. This Corynebacterium urealyticum (strain ATCC 43042 / DSM 7109) protein is Probable transcriptional regulatory protein cu0933.